The chain runs to 180 residues: Large ribosomal subunit protein uL6 (180 aa).

This sequence belongs to the universal ribosomal protein uL6 family. In terms of assembly, part of the 50S ribosomal subunit.

Functionally, this protein binds to the 23S rRNA, and is important in its secondary structure. It is located near the subunit interface in the base of the L7/L12 stalk, and near the tRNA binding site of the peptidyltransferase center. This Clostridium botulinum (strain 657 / Type Ba4) protein is Large ribosomal subunit protein uL6.